The chain runs to 806 residues: Lon protease 1 (806 aa).

Positions valine 31–leucine 235 constitute a Lon N-terminal domain. Glycine 389 to threonine 396 is an ATP binding site. In terms of domain architecture, Lon proteolytic spans alanine 626–phenylalanine 806. Residues serine 714 and lysine 757 contribute to the active site.

Belongs to the peptidase S16 family. As to quaternary structure, homohexamer. Organized in a ring with a central cavity.

The protein resides in the cytoplasm. The catalysed reaction is Hydrolysis of proteins in presence of ATP.. ATP-dependent serine protease that mediates the selective degradation of mutant and abnormal proteins as well as certain short-lived regulatory proteins. Required for cellular homeostasis and for survival from DNA damage and developmental changes induced by stress. Degrades polypeptides processively to yield small peptide fragments that are 5 to 10 amino acids long. Binds to DNA in a double-stranded, site-specific manner. This chain is Lon protease 1, found in Borreliella burgdorferi (strain ATCC 35210 / DSM 4680 / CIP 102532 / B31) (Borrelia burgdorferi).